A 334-amino-acid chain; its full sequence is Phosphoribosylformylglycinamidine cyclo-ligase (334 aa).

This sequence belongs to the AIR synthase family.

Its subcellular location is the cytoplasm. It carries out the reaction 2-formamido-N(1)-(5-O-phospho-beta-D-ribosyl)acetamidine + ATP = 5-amino-1-(5-phospho-beta-D-ribosyl)imidazole + ADP + phosphate + H(+). It functions in the pathway purine metabolism; IMP biosynthesis via de novo pathway; 5-amino-1-(5-phospho-D-ribosyl)imidazole from N(2)-formyl-N(1)-(5-phospho-D-ribosyl)glycinamide: step 2/2. This Pyrococcus horikoshii (strain ATCC 700860 / DSM 12428 / JCM 9974 / NBRC 100139 / OT-3) protein is Phosphoribosylformylglycinamidine cyclo-ligase.